The following is a 218-amino-acid chain: Probable GTP-binding protein EngB (218 aa).

Positions 23–200 constitute an EngB-type G domain; the sequence is EVPEIAFVGR…AQLLWQWAHP (178 aa). GTP is bound by residues 31-38, 58-62, 80-83, 150-153, and 179-181; these read GRSNAGKS, GRTQH, DLPG, TKAD, and FSA. The Mg(2+) site is built by S38 and T60.

It belongs to the TRAFAC class TrmE-Era-EngA-EngB-Septin-like GTPase superfamily. EngB GTPase family. Requires Mg(2+) as cofactor.

Its function is as follows. Necessary for normal cell division and for the maintenance of normal septation. The chain is Probable GTP-binding protein EngB from Acidovorax ebreus (strain TPSY) (Diaphorobacter sp. (strain TPSY)).